We begin with the raw amino-acid sequence, 83 residues long: RNA-binding protein Hfq (83 aa).

The Sm domain occupies 10–69 (DPFLNALRREHVPVSIYLVNGIKLQGQIESFDQYVVLLRNTVTQMVYKHAISTIVPGRAV).

It belongs to the Hfq family. In terms of assembly, homohexamer.

RNA chaperone that binds small regulatory RNA (sRNAs) and mRNAs to facilitate mRNA translational regulation in response to envelope stress, environmental stress and changes in metabolite concentrations. Also binds with high specificity to tRNAs. This is RNA-binding protein Hfq from Acidovorax ebreus (strain TPSY) (Diaphorobacter sp. (strain TPSY)).